A 392-amino-acid polypeptide reads, in one-letter code: Chaperone protein DnaJ (392 aa).

Positions 2 to 67 (DYYTILGVAK…QKRESYDRYG (66 aa)) constitute a J domain. The CR-type zinc finger occupies 149–227 (GVEKELLVSG…CRGQGRIKDK (79 aa)). C162, C165, C179, C182, C201, C204, C215, and C218 together coordinate Zn(2+). 4 CXXCXGXG motif repeats span residues 162-169 (CDACSGSG), 179-186 (CDRCKGSG), 201-208 (CPDCSGEG), and 215-222 (CSECRGQG).

It belongs to the DnaJ family. Homodimer. Requires Zn(2+) as cofactor.

It is found in the cytoplasm. Participates actively in the response to hyperosmotic and heat shock by preventing the aggregation of stress-denatured proteins and by disaggregating proteins, also in an autonomous, DnaK-independent fashion. Unfolded proteins bind initially to DnaJ; upon interaction with the DnaJ-bound protein, DnaK hydrolyzes its bound ATP, resulting in the formation of a stable complex. GrpE releases ADP from DnaK; ATP binding to DnaK triggers the release of the substrate protein, thus completing the reaction cycle. Several rounds of ATP-dependent interactions between DnaJ, DnaK and GrpE are required for fully efficient folding. Also involved, together with DnaK and GrpE, in the DNA replication of plasmids through activation of initiation proteins. The sequence is that of Chaperone protein DnaJ from Chlamydia muridarum (strain MoPn / Nigg).